The primary structure comprises 224 residues: Ribonuclease T (224 aa).

In terms of domain architecture, Exonuclease spans 20-195 (VVIDVETAGF…YDTQKTAELF (176 aa)). Asp-23, Glu-25, His-182, and Asp-187 together coordinate Mg(2+). His-182 serves as the catalytic Proton donor/acceptor.

Belongs to the RNase T family. Homodimer. Mg(2+) is required as a cofactor.

Its function is as follows. Trims short 3' overhangs of a variety of RNA species, leaving a one or two nucleotide 3' overhang. Responsible for the end-turnover of tRNA: specifically removes the terminal AMP residue from uncharged tRNA (tRNA-C-C-A). Also appears to be involved in tRNA biosynthesis. This is Ribonuclease T from Vibrio cholerae serotype O1 (strain ATCC 39315 / El Tor Inaba N16961).